Reading from the N-terminus, the 205-residue chain is NADH-quinone oxidoreductase subunit C (205 aa).

The protein belongs to the complex I 30 kDa subunit family. NDH-1 is composed of 14 different subunits. Subunits NuoB, C, D, E, F, and G constitute the peripheral sector of the complex.

The protein localises to the cell inner membrane. It carries out the reaction a quinone + NADH + 5 H(+)(in) = a quinol + NAD(+) + 4 H(+)(out). Functionally, NDH-1 shuttles electrons from NADH, via FMN and iron-sulfur (Fe-S) centers, to quinones in the respiratory chain. The immediate electron acceptor for the enzyme in this species is believed to be ubiquinone. Couples the redox reaction to proton translocation (for every two electrons transferred, four hydrogen ions are translocated across the cytoplasmic membrane), and thus conserves the redox energy in a proton gradient. The protein is NADH-quinone oxidoreductase subunit C of Bartonella bacilliformis (strain ATCC 35685 / KC583 / Herrer 020/F12,63).